Reading from the N-terminus, the 385-residue chain is Mannitol-1-phosphate 5-dehydrogenase (385 aa).

An NAD(+)-binding site is contributed by 3-14 (ALHFGAGNIGRG).

Belongs to the mannitol dehydrogenase family.

The enzyme catalyses D-mannitol 1-phosphate + NAD(+) = beta-D-fructose 6-phosphate + NADH + H(+). In Pasteurella multocida (strain Pm70), this protein is Mannitol-1-phosphate 5-dehydrogenase.